We begin with the raw amino-acid sequence, 379 residues long: Homoserine O-succinyltransferase (379 aa).

Residues 51-360 (NAVLICHALS…DAPQGHDAFL (310 aa)) form the AB hydrolase-1 domain. Ser-157 serves as the catalytic Nucleophile. Arg-227 contributes to the substrate binding site. Catalysis depends on residues Asp-323 and His-356. Asp-357 is a substrate binding site.

The protein belongs to the AB hydrolase superfamily. MetX family. Homodimer.

The protein resides in the cytoplasm. The enzyme catalyses L-homoserine + succinyl-CoA = O-succinyl-L-homoserine + CoA. It participates in amino-acid biosynthesis; L-methionine biosynthesis via de novo pathway; O-succinyl-L-homoserine from L-homoserine: step 1/1. In terms of biological role, transfers a succinyl group from succinyl-CoA to L-homoserine, forming succinyl-L-homoserine. The polypeptide is Homoserine O-succinyltransferase (Pseudomonas fluorescens (strain Pf0-1)).